A 434-amino-acid polypeptide reads, in one-letter code: MTEFSPREIVSELDRFIVGHPEAKRAVAVALRNRWRRRRVPDDLRDEVTPKNILMIGPTGVGKTEIARRLAKLAQAPFLKVEATKFTEVGYVGRDVDQIVRDLVESAIQMVREKRRAAVRARAEAAAEERILDALTGPGSTAAREAFRRKLRAGELDDKEVELQLADTSSPFGAMDIPGQPGASMGVLNLGDMFGKAFGGRTKTHKTTVSGAWVPLIAEESDKLVDQEALTQEALELAENQGIVFLDEIDKVASRQDRAGADVSREGVQRDLLPLIEGTTVSTKHGPVKTDHILFIASGAFHVAKPSDLLPELQGRLPIRVELKALSRQDMRRILTEPEANLIRQHQALLATEGVTLTFTEDAIDALADAAVAVNGSVENIGARRLQTILEKVLEEVSFTAADRDGETITVDAAYVNGRIGDLAGNADLSKFIL.

ATP contacts are provided by residues valine 18, 60–65, aspartate 247, glutamate 312, and arginine 384; that span reads GVGKTE.

Belongs to the ClpX chaperone family. HslU subfamily. In terms of assembly, a double ring-shaped homohexamer of HslV is capped on each side by a ring-shaped HslU homohexamer. The assembly of the HslU/HslV complex is dependent on binding of ATP.

Its subcellular location is the cytoplasm. Its function is as follows. ATPase subunit of a proteasome-like degradation complex; this subunit has chaperone activity. The binding of ATP and its subsequent hydrolysis by HslU are essential for unfolding of protein substrates subsequently hydrolyzed by HslV. HslU recognizes the N-terminal part of its protein substrates and unfolds these before they are guided to HslV for hydrolysis. This is ATP-dependent protease ATPase subunit HslU from Phenylobacterium zucineum (strain HLK1).